The sequence spans 265 residues: Large ribosomal subunit protein eL8 (265 aa).

This sequence belongs to the eukaryotic ribosomal protein eL8 family. Interacts with cmd-1 in the presence of Ca(2+).

This Caenorhabditis elegans protein is Large ribosomal subunit protein eL8.